The chain runs to 374 residues: MRAIGLMSGTSLDGIDVALIESDGETVRVRRGHNGRIGPLGPTGYRAYSDEDRALLRRALAEAEAIAVRTDRPGCLREAEERVTRLHAEAVENFLTENGLTPADIDLIGFHGQTVIHRPGQGLTVQIGDGARLSRHLGIPVVSDFRQADVAAGGQGAPLVPIFHRALARASGFEGSLAILNIGGVANVTLIAGNGDLLAFDTGPGNALIDDWMSERASRPFDARGSTAAAGRPDEALLAWLLVHPYFTRRPPKSLDRNSFSHRLVGPLSTEDGAATLTAFTVRAVARALDFASEPPRRWIVAGGGARNDEMLRLLRHHLRAEVTPADEIGWSSAFLEAQAFAHLAVRAWNGLPITFPSTTGVSAPMTGGVTARP.

Residue 9–16 participates in ATP binding; it reads GTSLDGID.

This sequence belongs to the anhydro-N-acetylmuramic acid kinase family.

It carries out the reaction 1,6-anhydro-N-acetyl-beta-muramate + ATP + H2O = N-acetyl-D-muramate 6-phosphate + ADP + H(+). It functions in the pathway amino-sugar metabolism; 1,6-anhydro-N-acetylmuramate degradation. It participates in cell wall biogenesis; peptidoglycan recycling. Functionally, catalyzes the specific phosphorylation of 1,6-anhydro-N-acetylmuramic acid (anhMurNAc) with the simultaneous cleavage of the 1,6-anhydro ring, generating MurNAc-6-P. Is required for the utilization of anhMurNAc either imported from the medium or derived from its own cell wall murein, and thus plays a role in cell wall recycling. The polypeptide is Anhydro-N-acetylmuramic acid kinase (Methylobacterium nodulans (strain LMG 21967 / CNCM I-2342 / ORS 2060)).